We begin with the raw amino-acid sequence, 61 residues long: ERMES regulator 1 (61 aa).

The Mitochondrial intermembrane portion of the chain corresponds to 1–20 (MLPNLRRIFASFRTEEEERS). The chain crosses the membrane as a helical span at residues 21 to 43 (YSRKAFFHLIGYITCSVLFSWLV). Topologically, residues 44 to 61 (RKKVISSPVVSSPIHALS) are cytoplasmic.

The protein belongs to the EMR1 family. In terms of assembly, interacts with the ER-mitochondria encounter structure (ERMES) complex. Interacts with mdm12. Interacts with mdm34.

The protein localises to the mitochondrion outer membrane. In terms of biological role, mediates the formation of endoplasmic reticulum (ER)-mitochondria encounter structure (ERMES) foci, thereby contributing to the formation of ER-mitochondrial contact sites. The polypeptide is ERMES regulator 1 (Schizosaccharomyces pombe (strain 972 / ATCC 24843) (Fission yeast)).